Reading from the N-terminus, the 96-residue chain is Protein TraA (96 aa).

This Escherichia coli protein is Protein TraA (traA).